Here is a 146-residue protein sequence, read N- to C-terminus: Protein translocase subunit SecE (146 aa).

The disordered stretch occupies residues 1 to 81; that stretch reads MSDERYAASD…KVKKPKKSAD (81 aa). The segment covering 10-20 has biased composition (gly residues); the sequence is DGGGTEVGSGT. Residues 45–54 are compositionally biased toward polar residues; that stretch reads RAANASNTGA. Over residues 69–81 the composition is skewed to basic and acidic residues; sequence KEGKVKKPKKSAD. Residues 118-138 traverse the membrane as a helical segment; it reads VVLAFLAFMVALVGLADFGLA.

The protein belongs to the SecE/SEC61-gamma family. In terms of assembly, component of the Sec protein translocase complex. Heterotrimer consisting of SecY, SecE and SecG subunits. The heterotrimers can form oligomers, although 1 heterotrimer is thought to be able to translocate proteins. Interacts with the ribosome. Interacts with SecDF, and other proteins may be involved. Interacts with SecA.

Its subcellular location is the cell membrane. In terms of biological role, essential subunit of the Sec protein translocation channel SecYEG. Clamps together the 2 halves of SecY. May contact the channel plug during translocation. This Mycobacterium leprae (strain TN) protein is Protein translocase subunit SecE.